The chain runs to 185 residues: Threonylcarbamoyl-AMP synthase (185 aa).

The region spanning 4–185 (DWRVQQVARV…LRSGEVIRPA (182 aa)) is the YrdC-like domain.

This sequence belongs to the SUA5 family. TsaC subfamily.

The protein localises to the cytoplasm. It catalyses the reaction L-threonine + hydrogencarbonate + ATP = L-threonylcarbamoyladenylate + diphosphate + H2O. Its function is as follows. Required for the formation of a threonylcarbamoyl group on adenosine at position 37 (t(6)A37) in tRNAs that read codons beginning with adenine. Catalyzes the conversion of L-threonine, HCO(3)(-)/CO(2) and ATP to give threonylcarbamoyl-AMP (TC-AMP) as the acyladenylate intermediate, with the release of diphosphate. The sequence is that of Threonylcarbamoyl-AMP synthase from Stutzerimonas stutzeri (strain A1501) (Pseudomonas stutzeri).